A 284-amino-acid chain; its full sequence is Shikimate dehydrogenase (NADP(+)) (284 aa).

Shikimate is bound by residues 20-22 and serine 67; that span reads SIS. The Proton acceptor role is filled by lysine 71. Aspartate 83 is an NADP(+) binding site. The shikimate site is built by asparagine 92 and aspartate 107. NADP(+) contacts are provided by residues 129–133 and isoleucine 227; that span reads GAGGA. Tyrosine 229 is a shikimate binding site. Glycine 250 is a binding site for NADP(+).

This sequence belongs to the shikimate dehydrogenase family. As to quaternary structure, homodimer.

It carries out the reaction shikimate + NADP(+) = 3-dehydroshikimate + NADPH + H(+). The protein operates within metabolic intermediate biosynthesis; chorismate biosynthesis; chorismate from D-erythrose 4-phosphate and phosphoenolpyruvate: step 4/7. In terms of biological role, involved in the biosynthesis of the chorismate, which leads to the biosynthesis of aromatic amino acids. Catalyzes the reversible NADPH linked reduction of 3-dehydroshikimate (DHSA) to yield shikimate (SA). This is Shikimate dehydrogenase (NADP(+)) from Streptococcus pneumoniae (strain CGSP14).